The primary structure comprises 129 residues: Small ribosomal subunit protein uS11c (129 aa).

Belongs to the universal ribosomal protein uS11 family. As to quaternary structure, part of the 30S ribosomal subunit.

The protein resides in the plastid. It localises to the chloroplast. This Pleurastrum terricola (Filamentous green alga) protein is Small ribosomal subunit protein uS11c.